The sequence spans 348 residues: Ninja-family protein AFP2 (348 aa).

The tract at residues 186–272 (DSDGGGATGG…VDRKGKGMAT (87 aa)) is disordered. The segment covering 187–197 (SDGGGATGGGS) has biased composition (gly residues). Polar residues-rich tracts occupy residues 207–216 (KNQQGSSNSC) and 228–244 (CSSNSGSQGTERPSVTR). Over residues 247–267 (KVNENENEKRVRSEDSVDRKG) the composition is skewed to basic and acidic residues.

This sequence belongs to the Ninja family. As to quaternary structure, forms a homodimer and heterodimer with AFP1 and AFP3. Interacts with ABI5/DPBF1, DPBF2, AREB3/DPBF3, EEL/DPBF4, ABF1, ABF3/DPBF5 and ABF4/AREB2.

It is found in the nucleus. Its function is as follows. Acts as a negative regulator of abscisic acid (ABA) response during germination through the ubiquitin-mediated proteolysis of ABI5/DPBF1. This is Ninja-family protein AFP2 (AFP2) from Arabidopsis thaliana (Mouse-ear cress).